We begin with the raw amino-acid sequence, 617 residues long: Chaperone protein HscA homolog (617 aa).

Belongs to the heat shock protein 70 family.

Its function is as follows. Chaperone involved in the maturation of iron-sulfur cluster-containing proteins. Has a low intrinsic ATPase activity which is markedly stimulated by HscB. This chain is Chaperone protein HscA homolog, found in Actinobacillus pleuropneumoniae serotype 5b (strain L20).